We begin with the raw amino-acid sequence, 582 residues long: PCNA-interacting partner (582 aa).

2 stretches are compositionally biased toward polar residues: residues 471–487 and 501–510; these read GVNS…SSGN and KSSSLTGNTS. The interval 471–514 is disordered; sequence GVNSSVGRPTIGTSSGNVHLGRSEKEKVARKSSSLTGNTSSKRK.

Belongs to the PARI family. As to quaternary structure, interacts with RAD51 and PCNA. Interacts with PARP1. Interacts with TASOR.

The protein resides in the cytoplasm. The protein localises to the nucleus. In terms of biological role, required to suppress inappropriate homologous recombination, thereby playing a central role DNA repair and in the maintenance of genomic stability. Antagonizes homologous recombination by interfering with the formation of the RAD51-DNA homologous recombination structure. Binds single-strand DNA and poly(A) homopolymers. Positively regulate the poly(ADP-ribosyl)ation activity of PARP1; however such function may be indirect. The chain is PCNA-interacting partner (PARPBP) from Bos taurus (Bovine).